Consider the following 133-residue polypeptide: Fatty acid-binding protein, heart (133 aa).

N-acetylvaline is present on valine 2. Threonine 8 bears the Phosphothreonine mark. A Phosphotyrosine; by Tyr-kinases modification is found at tyrosine 20. Serine 23 is subject to Phosphoserine. Threonine 30 carries the post-translational modification Phosphothreonine. Serine 83 bears the Phosphoserine mark. Residue 127–129 participates in (9Z)-octadecenoate binding; sequence RTY. Position 127-129 (127-129) interacts with hexadecanoate; that stretch reads RTY. Residue 127–129 participates in octadecanoate binding; that stretch reads RTY.

Belongs to the calycin superfamily. Fatty-acid binding protein (FABP) family.

Its subcellular location is the cytoplasm. Its function is as follows. FABPs are thought to play a role in the intracellular transport of long-chain fatty acids and their acyl-CoA esters. This chain is Fatty acid-binding protein, heart (FABP3), found in Homo sapiens (Human).